Here is a 1017-residue protein sequence, read N- to C-terminus: Putative calcium-transporting ATPase 13, plasma membrane-type (1017 aa).

N-acetylmethionine is present on Met-1. The Cytoplasmic portion of the chain corresponds to 1-147; sequence MRRNVSDHAE…NTYTRQPSKG (147 aa). Residues 20–31 are interaction with calmodulin; the sequence is LLELPKTLSKSN. The chain crosses the membrane as a helical span at residues 148 to 168; that stretch reads LFHFVVEAFKDLTILILLGCA. The Lumenal portion of the chain corresponds to 169–186; it reads TLSLGFGIKEHGLKEGWY. The helical transmembrane segment at 187-207 threads the bilayer; sequence DGGSIFVAVFLVVAVSAVSNF. At 208–336 the chain is on the cytoplasmic side; sequence RQNRQFDKLS…NEQTPLQSRL (129 aa). A helical membrane pass occupies residues 337–356; the sequence is DKLTSSIGKVGLLVAFLVLL. The Lumenal segment spans residues 357-393; it reads VLLIRYFTGTTKDESGNREYNGKTTKSDEIVNAVVKM. The chain crosses the membrane as a helical span at residues 394–411; that stretch reads VAAAVTIIVVAIPEGLPL. Topologically, residues 412–802 are cytoplasmic; it reads AVTLTLAYSM…KWGRCVYNNI (391 aa). The 4-aspartylphosphate intermediate role is filled by Asp-449. Residues Asp-747 and Asp-751 each coordinate Mg(2+). The helical transmembrane segment at 803-821 threads the bilayer; it reads QKFIQFQLTVNVAALVINF. Residues 822–832 lie on the Lumenal side of the membrane; that stretch reads VAAVSAGDVPL. The chain crosses the membrane as a helical span at residues 833 to 853; sequence TAVQLLWVNLIMDTLGALALA. The Cytoplasmic portion of the chain corresponds to 854–873; that stretch reads TEKPTNDLMKKKPIGRVAPL. A helical membrane pass occupies residues 874–896; the sequence is ITNIMWRNLLAQAFYQISVLLVL. Residues 897 to 905 are Lumenal-facing; sequence QFRGRSIFN. Residues 906–926 traverse the membrane as a helical segment; it reads VTEKVKNTLIFNTFVLCQVFN. Residues 927–944 are Cytoplasmic-facing; it reads EFNARSLEKKNVFKGLHK. Residues 945–966 form a helical membrane-spanning segment; the sequence is NRLFIGIIVVTVVLQVVMVEFL. Residues 967 to 976 are Lumenal-facing; the sequence is KRFADTERLN. Residues 977–998 form a helical membrane-spanning segment; that stretch reads LGQWGVCIAIAAASWPIGWLVK. Topologically, residues 999–1002 are cytoplasmic; that stretch reads SVPV.

This sequence belongs to the cation transport ATPase (P-type) (TC 3.A.3) family. Type IIB subfamily.

The protein localises to the membrane. It carries out the reaction Ca(2+)(in) + ATP + H2O = Ca(2+)(out) + ADP + phosphate + H(+). Activated by calmodulin. Functionally, this magnesium-dependent enzyme catalyzes the hydrolysis of ATP coupled with the translocation of calcium from the cytosol out of the cell or into organelles. In Arabidopsis thaliana (Mouse-ear cress), this protein is Putative calcium-transporting ATPase 13, plasma membrane-type (ACA13).